Here is a 471-residue protein sequence, read N- to C-terminus: Siroheme synthase (471 aa).

A precorrin-2 dehydrogenase /sirohydrochlorin ferrochelatase region spans residues 1-203; that stretch reads MEYLPLFADL…GRLEQAEQAL (203 aa). Residues 22-23 and 43-44 contribute to the NAD(+) site; these read EV and RA. Ser128 bears the Phosphoserine mark. The interval 215–471 is uroporphyrinogen-III C-methyltransferase; sequence GEVALVGAGP…QKRASVVNLA (257 aa). Pro224 contacts S-adenosyl-L-methionine. Asp247 (proton acceptor) is an active-site residue. Catalysis depends on Lys269, which acts as the Proton donor. Residues 300-302, Ile305, 330-331, Met382, and Gly411 contribute to the S-adenosyl-L-methionine site; these read GGD and TA.

In the N-terminal section; belongs to the precorrin-2 dehydrogenase / sirohydrochlorin ferrochelatase family. The protein in the C-terminal section; belongs to the precorrin methyltransferase family.

It carries out the reaction uroporphyrinogen III + 2 S-adenosyl-L-methionine = precorrin-2 + 2 S-adenosyl-L-homocysteine + H(+). The catalysed reaction is precorrin-2 + NAD(+) = sirohydrochlorin + NADH + 2 H(+). It catalyses the reaction siroheme + 2 H(+) = sirohydrochlorin + Fe(2+). It functions in the pathway cofactor biosynthesis; adenosylcobalamin biosynthesis; precorrin-2 from uroporphyrinogen III: step 1/1. It participates in cofactor biosynthesis; adenosylcobalamin biosynthesis; sirohydrochlorin from precorrin-2: step 1/1. The protein operates within porphyrin-containing compound metabolism; siroheme biosynthesis; precorrin-2 from uroporphyrinogen III: step 1/1. Its pathway is porphyrin-containing compound metabolism; siroheme biosynthesis; siroheme from sirohydrochlorin: step 1/1. It functions in the pathway porphyrin-containing compound metabolism; siroheme biosynthesis; sirohydrochlorin from precorrin-2: step 1/1. Multifunctional enzyme that catalyzes the SAM-dependent methylations of uroporphyrinogen III at position C-2 and C-7 to form precorrin-2 via precorrin-1. Then it catalyzes the NAD-dependent ring dehydrogenation of precorrin-2 to yield sirohydrochlorin. Finally, it catalyzes the ferrochelation of sirohydrochlorin to yield siroheme. This Sodalis glossinidius (strain morsitans) protein is Siroheme synthase.